Consider the following 551-residue polypeptide: Electron transfer flavoprotein-ubiquinone oxidoreductase (551 aa).

Valine 10–cysteine 24 lines the FAD pocket. Cysteine 496, cysteine 520, cysteine 523, and cysteine 526 together coordinate [4Fe-4S] cluster. Positions lysine 511–proline 540 constitute a 4Fe-4S ferredoxin-type domain.

This sequence belongs to the ETF-QO/FixC family. The cofactor is [4Fe-4S] cluster. Requires FAD as cofactor.

It catalyses the reaction a ubiquinone + reduced [electron-transfer flavoprotein] = a ubiquinol + oxidized [electron-transfer flavoprotein] + H(+). Functionally, accepts electrons from ETF and reduces ubiquinone. The polypeptide is Electron transfer flavoprotein-ubiquinone oxidoreductase (Pseudomonas aeruginosa (strain ATCC 15692 / DSM 22644 / CIP 104116 / JCM 14847 / LMG 12228 / 1C / PRS 101 / PAO1)).